The following is a 272-amino-acid chain: ATP phosphoribosyltransferase regulatory subunit (272 aa).

This sequence belongs to the class-II aminoacyl-tRNA synthetase family. HisZ subfamily. As to quaternary structure, heteromultimer composed of HisG and HisZ subunits.

It is found in the cytoplasm. It functions in the pathway amino-acid biosynthesis; L-histidine biosynthesis; L-histidine from 5-phospho-alpha-D-ribose 1-diphosphate: step 1/9. Required for the first step of histidine biosynthesis. May allow the feedback regulation of ATP phosphoribosyltransferase activity by histidine. The sequence is that of ATP phosphoribosyltransferase regulatory subunit from Staphylococcus aureus (strain Mu3 / ATCC 700698).